The primary structure comprises 303 residues: Aspartate carbamoyltransferase catalytic subunit (303 aa).

Carbamoyl phosphate-binding residues include Arg-51 and Thr-52. L-aspartate is bound at residue Lys-80. Residues Arg-101, His-129, and Gln-132 each contribute to the carbamoyl phosphate site. 2 residues coordinate L-aspartate: Arg-162 and Arg-221. 2 residues coordinate carbamoyl phosphate: Leu-260 and Pro-261.

It belongs to the aspartate/ornithine carbamoyltransferase superfamily. ATCase family. Heterooligomer of catalytic and regulatory chains.

The enzyme catalyses carbamoyl phosphate + L-aspartate = N-carbamoyl-L-aspartate + phosphate + H(+). The protein operates within pyrimidine metabolism; UMP biosynthesis via de novo pathway; (S)-dihydroorotate from bicarbonate: step 2/3. Functionally, catalyzes the condensation of carbamoyl phosphate and aspartate to form carbamoyl aspartate and inorganic phosphate, the committed step in the de novo pyrimidine nucleotide biosynthesis pathway. The chain is Aspartate carbamoyltransferase catalytic subunit from Saccharolobus islandicus (strain Y.N.15.51 / Yellowstone #2) (Sulfolobus islandicus).